A 1103-amino-acid chain; its full sequence is MADLVTYSNADHNLEQALITLKKGTQLLKYGRKGKPKFYPFRLSSDEKSLIWISSSGEKRLKLASVSKIVPGQRTAVFQRYLRPEKDYLSFSLLYNGKKKSLDLICKDKVEAEIWIGGLKTLISTGQGGRSKIDGWSGGGLSVDASRELTSSSPSSSSASASRGHSSPGTPFNIDPITSPKSAEPEVPPTDSEKSHVALDNKNMQTKVSGSDGFRVSVSSAQSSSSHGSAADDSDALGDVYIWGEVICDNVVKVGIDKNASYLTTRTDVLVPKPLESNIVLDVHQIACGVRHAAFVTRQGEIFTWGEESGGRLGHGIGKDVFHPRLVESLTATSSVDFVACGEFHTCAVTLAGELYTWGDGTHNVGLLGHGSDISHWIPKRIAGSLEGLHVASVSCGPWHTALITSYGRLFTFGDGTFGVLGHGDKETVQYPREVESLSGLRTIAVSCGVWHTAAVVEIIVTQSNSSSVSSGKLFTWGDGDKNRLGHGDKDPRLKPTCVPALIDYNFHKIACGHSLTVGLTTSGQVFTMGSTVYGQLGNLQTDGKLPCLVEDKLASEFVEEISCGAYHVAALTSRNEVYTWGKGANGRLGHGDLEDRKVPTIVEALKDRHVKYIACGSNYTAAICLHKWVSGAEQSQCSTCRLAFGFTRKRHNCYNCGLVHCHSCSSKKAFRAALAPSAGRLYRVCDSCYVKLSKVSEINDTNRRNSAVPRLSGENRDRLDKSEIRLAKFGTSNMDLIKQLDSKAAKQGKKTDTFSLGRNSQLPSLLQLKDAVQSNIGDMRRATPKLAQAPSGISSRSVSPFSRRSSPPRSATPMPSTSGLYFPVGIADNMKKTNEILNQEIVKLRTQVDSLTQKCEFQEVELQNSVKKTQEALALAEEESAKSRAAKEAIKSLIAQLKDVAEKLPPGESVKLACLQNGLDQNGFHFPEENGFHPSRSESMTSSISSVAPFDFAFANASWSNLQSPKQTPRASERNSNAYPADPRLSSSGSVISERIEPFQFQNNSDNGSSQTGVNNTNQVEAEWIEQYEPGVYITLVALHDGTRDLRRVRFSRRRFGEHQAETWWSENREKVYEKYNVRVSEKSTASQTHRDRDEEEEDIPH.

The region spanning 22–123 (KKGTQLLKYG…IWIGGLKTLI (102 aa)) is the PH domain. Residues 144–233 (DASRELTSSS…SSSHGSAADD (90 aa)) are disordered. Composition is skewed to low complexity over residues 151 to 169 (SSSP…SSPG) and 217 to 231 (SVSS…GSAA). RCC1 repeat units lie at residues 237 to 298 (LGDV…FVTR), 299 to 351 (QGEI…AVTL), 353 to 406 (GELY…LITS), 407 to 458 (YGRL…AVVE), 471 to 522 (SGKL…GLTT), 524 to 574 (GQVF…ALTS), and 575 to 626 (RNEV…AICL). An FYVE-type zinc finger spans residues 632 to 694 (GAEQSQCSTC…VCDSCYVKLS (63 aa)). Residues Cys638, Cys641, Cys654, Cys657, Cys662, Cys665, Cys686, and Cys689 each contribute to the Zn(2+) site. The disordered stretch occupies residues 783 to 818 (ATPKLAQAPSGISSRSVSPFSRRSSPPRSATPMPST). Over residues 791–818 (PSGISSRSVSPFSRRSSPPRSATPMPST) the composition is skewed to low complexity. A coiled-coil region spans residues 828–904 (ADNMKKTNEI…IAQLKDVAEK (77 aa)). Residues 962–979 (NLQSPKQTPRASERNSNA) show a composition bias toward polar residues. Residues 962–988 (NLQSPKQTPRASERNSNAYPADPRLSS) are disordered. Residues 1023 to 1078 (AEWIEQYEPGVYITLVALHDGTRDLRRVRFSRRRFGEHQAETWWSENREKVYEKYN) enclose the BRX domain. The interval 1079–1103 (VRVSEKSTASQTHRDRDEEEEDIPH) is disordered.

As to expression, mostly expressed in flowers, and, to a lower extent, in stems, leaves, siliques, seeds.

Its function is as follows. Binds to phosphatidic acid and to phosphoinositides such as PtdIns3P, PtdIns(3,4)P(2), PtdIns(3,4,5)P(3) and PtdIns(4,5)P(2). Catalyzes guanine nucleotide exchange on specific Rab proteins. This chain is PH, RCC1 and FYVE domains-containing protein 1, found in Arabidopsis thaliana (Mouse-ear cress).